A 107-amino-acid chain; its full sequence is Toluene 1,2-dioxygenase system ferredoxin subunit (107 aa).

The Rieske domain occupies 4-99 (TYILRQGDLP…IKVEGDEVHV (96 aa)). [2Fe-2S] cluster-binding residues include Cys43, His45, Cys62, and His65.

Belongs to the bacterial ring-hydroxylating dioxygenase ferredoxin component family. As to quaternary structure, this dioxygenase system consists of four proteins: the two subunits of the hydroxylase component (todC1 and todC2), a ferredoxin (TodB) and a ferredoxin reductase (TodA).

The protein operates within xenobiotic degradation; toluene degradation. In terms of biological role, this protein seems to be a 2Fe-2S ferredoxin. This is Toluene 1,2-dioxygenase system ferredoxin subunit (todB) from Pseudomonas putida (strain ATCC 700007 / DSM 6899 / JCM 31910 / BCRC 17059 / LMG 24140 / F1).